Consider the following 701-residue polypeptide: Elongation factor G 1 (701 aa).

Residues 8 to 290 (VRYRNIGICA…AVVEYLPAPT (283 aa)) enclose the tr-type G domain. Residues 17 to 24 (AHVDAGKT), 88 to 92 (DTPGH), and 142 to 145 (NKMD) each bind GTP.

It belongs to the TRAFAC class translation factor GTPase superfamily. Classic translation factor GTPase family. EF-G/EF-2 subfamily.

Its subcellular location is the cytoplasm. Functionally, catalyzes the GTP-dependent ribosomal translocation step during translation elongation. During this step, the ribosome changes from the pre-translocational (PRE) to the post-translocational (POST) state as the newly formed A-site-bound peptidyl-tRNA and P-site-bound deacylated tRNA move to the P and E sites, respectively. Catalyzes the coordinated movement of the two tRNA molecules, the mRNA and conformational changes in the ribosome. The polypeptide is Elongation factor G 1 (Saccharophagus degradans (strain 2-40 / ATCC 43961 / DSM 17024)).